Here is a 528-residue protein sequence, read N- to C-terminus: Glucans biosynthesis protein G 2 (528 aa).

The N-terminal stretch at 1-44 (MRLHLTFNHSTPATGRKNTKHTLFFGSMLACIISIISLVVPAYG) is a signal peptide.

Belongs to the OpgD/OpgG family.

It is found in the periplasm. It functions in the pathway glycan metabolism; osmoregulated periplasmic glucan (OPG) biosynthesis. Its function is as follows. Involved in the biosynthesis of osmoregulated periplasmic glucans (OPGs). This chain is Glucans biosynthesis protein G 2 (opgG2), found in Shewanella oneidensis (strain ATCC 700550 / JCM 31522 / CIP 106686 / LMG 19005 / NCIMB 14063 / MR-1).